The chain runs to 405 residues: Growth/differentiation factor 11 (405 aa).

The first 20 residues, 1-20 (MVLAAPLLLGFLLLALELRP), serve as a signal peptide directing secretion. A propeptide spanning residues 21–296 (RGEAAEGPAA…VLENTKRSRR (276 aa)) is cleaved from the precursor. A glycan (N-linked (GlcNAc...) asparagine) is linked at Asn92. 4 disulfides stabilise this stretch: Cys302-Cys312, Cys311-Cys370, Cys339-Cys402, and Cys343-Cys404.

It belongs to the TGF-beta family. As to quaternary structure, homodimer; disulfide-linked. Interacts directly with ACVR2B. Interacts directly with ACVR2A. Interacts with ACVR1B, TGFBR1 and ACVR1C in an ACVR2B-dependent manner. Interacts with FST isoform 2/FS288. In terms of processing, synthesized as large precursor molecule that undergoes proteolytic cleavage by furin-like proteases. This produces an inactive form consisting of the mature C-terminal portion non-covalently bound to its cleaved N-terminal propeptide. Activation of the mature form requires additional cleavage of the propeptide by a tolloid-like metalloproteinase. As to expression, highly expressed in the developing limb bud, initially detected in the distal mesenchyme, and later localizing to regions around the developing bones. Is also expressed in adult dental pulp and brain.

The protein localises to the secreted. Functionally, secreted signal that acts globally to regulate anterior/posterior axial patterning during development. May play critical roles in patterning both mesodermal and neural tissues. It is required for proper vertebral patterning and orofacial development. Signals through activin receptors type-2, ACVR2A and ACVR2B, and activin receptors type-1, ACVR1B, ACVR1C and TGFBR1 leading to the phosphorylation of SMAD2 and SMAD3. The chain is Growth/differentiation factor 11 (Gdf11) from Mus musculus (Mouse).